Consider the following 682-residue polypeptide: K(+)-insensitive pyrophosphate-energized proton pump 2 (682 aa).

5 helical membrane passes run 1 to 21, 56 to 76, 78 to 98, 130 to 150, and 160 to 180; these read MELF…ALYM, TIAG…RQYH, AVAF…GMYV, LAVT…FGGA, and IVGF…SGGI. Lysine 183 is a binding site for substrate. The Mg(2+) site is built by aspartate 186, aspartate 190, and aspartate 216. The next 7 helical transmembrane spans lie at 237 to 257, 258 to 278, 291 to 311, 318 to 338, 353 to 373, 375 to 395, and 404 to 424; these read IGAM…GIVF, PLVA…FVRA, GYIV…RYML, FIYF…FVLI, IARA…AVGF, STAL…WLGL, and LYGT…ILAM. Residue aspartate 432 coordinates Mg(2+). A run of 4 helical transmembrane segments spans residues 468 to 488, 506 to 526, 574 to 594, and 595 to 615; these read YAIG…IDEV, EVFV…STAI, MVLP…VLKA, and EAAA…ALFL. 3 residues coordinate Ca(2+): aspartate 623, aspartate 649, and aspartate 653. Lysine 656 serves as a coordination point for substrate. A helical membrane pass occupies residues 662–682; it reads SLHVLVKLISTITLVLAGLFI.

Belongs to the H(+)-translocating pyrophosphatase (TC 3.A.10) family. K(+)-insensitive subfamily. Homodimer. Mg(2+) is required as a cofactor.

It is found in the cell membrane. It catalyses the reaction diphosphate + H2O + H(+)(in) = 2 phosphate + 2 H(+)(out). Its function is as follows. Proton pump that utilizes the energy of pyrophosphate hydrolysis as the driving force for proton movement across the membrane. Generates a proton motive force. This chain is K(+)-insensitive pyrophosphate-energized proton pump 2, found in Moorella thermoacetica (strain ATCC 39073 / JCM 9320).